The primary structure comprises 304 residues: Putative S-adenosyl-L-methionine-dependent methyltransferase MMAR_1057 (304 aa).

S-adenosyl-L-methionine-binding positions include aspartate 130 and 159–160 (DL).

The protein belongs to the UPF0677 family.

Exhibits S-adenosyl-L-methionine-dependent methyltransferase activity. The polypeptide is Putative S-adenosyl-L-methionine-dependent methyltransferase MMAR_1057 (Mycobacterium marinum (strain ATCC BAA-535 / M)).